The following is a 236-amino-acid chain: 7-cyano-7-deazaguanine synthase (236 aa).

Position 12–22 (Phe-12–Leu-22) interacts with ATP. Positions 200, 215, 218, and 221 each coordinate Zn(2+).

It belongs to the QueC family. It depends on Zn(2+) as a cofactor.

The catalysed reaction is 7-carboxy-7-deazaguanine + NH4(+) + ATP = 7-cyano-7-deazaguanine + ADP + phosphate + H2O + H(+). It functions in the pathway purine metabolism; 7-cyano-7-deazaguanine biosynthesis. Its function is as follows. Catalyzes the ATP-dependent conversion of 7-carboxy-7-deazaguanine (CDG) to 7-cyano-7-deazaguanine (preQ(0)). In Bradyrhizobium sp. (strain ORS 278), this protein is 7-cyano-7-deazaguanine synthase.